We begin with the raw amino-acid sequence, 297 residues long: MRDRTHELRQGDDSSDDEDKERVALVVHPGTARLGSPDDEFFQKVRTIRQTIVKLENKVRELEKQQVTILATPLPEESMKQDLQNLRDEIKQLGRDIRAQLKAIEPQKEEADENYNSVNTRMRKTQHGVLSQQFVELINKCNLMQSEYREKNVERIRRQLKITNAGMVSDKELEQMLDSGQSEVFVSNILKDTQVTRQALNEISARHSEIQQLERSIRELHEIFTFLATEVEMQGEMINRIEKNILSSADYVERGQEHVKVALENQKKARKKKVFIAICLSITVLILVVIIVISTLV.

Positions 1-12 (MRDRTHELRQGD) are enriched in basic and acidic residues. The interval 1 to 21 (MRDRTHELRQGDDSSDDEDKE) is disordered. The Cytoplasmic segment spans residues 1–275 (MRDRTHELRQ…QKKARKKKVF (275 aa)). Phosphoserine is present on residues serine 14 and serine 15. A Phosphothreonine modification is found at threonine 31. Phosphoserine occurs at positions 36, 117, 208, and 248. Residues 43–163 (QKVRTIRQTI…ERIRRQLKIT (121 aa)) adopt a coiled-coil conformation. The region spanning 200-262 (LNEISARHSE…ERGQEHVKVA (63 aa)) is the t-SNARE coiled-coil homology domain. The helical; Anchor for type IV membrane protein transmembrane segment at 276–296 (IAICLSITVLILVVIIVISTL) threads the bilayer. A topological domain (extracellular) is located at residue valine 297.

The protein belongs to the syntaxin family. As to quaternary structure, component of the SNARE complex composed of STX4, SNAP23 and VAMP7 that interacts with SYT7 during lysosomal exocytosis. Found in a complex with VAMP8 and SNAP23. Detected in a complex with SNAP23 and STXBP4. Interacts with VAMP2. Interacts with SNAP23 and SNAPIN. Interacts with LLGL1. Interacts (via C-terminus) with CENPF. Interacts with DOC2B. Interacts with STXBP6. Interacts with STXBP3; excludes interaction with DOC2B and SNAP25. Interacts with STXBP4; excludes interaction with VAMP2. Interacts with STXBP5L.

It is found in the cell membrane. The protein localises to the cell projection. The protein resides in the neuron projection. It localises to the stereocilium. In terms of biological role, plasma membrane t-SNARE that mediates docking of transport vesicles. Necessary for the translocation of SLC2A4 from intracellular vesicles to the plasma membrane. In neurons, recruited at neurite tips to membrane domains rich in the phospholipid 1-oleoyl-2-palmitoyl-PC (OPPC) which promotes neurite tip surface expression of the dopamine transporter SLC6A3/DAT by facilitating fusion of SLC6A3-containing transport vesicles with the plasma membrane. Together with STXB3 and VAMP2, may also play a role in docking/fusion of intracellular GLUT4-containing vesicles with the cell surface in adipocytes and in docking of synaptic vesicles at presynaptic active zones. Required for normal hearing. The chain is Syntaxin-4 (STX4) from Bos taurus (Bovine).